Here is a 494-residue protein sequence, read N- to C-terminus: Probable cytosol aminopeptidase (494 aa).

The Mn(2+) site is built by Lys-260 and Asp-265. Lys-272 is a catalytic residue. Residues Asp-283, Asp-342, and Glu-344 each coordinate Mn(2+). The active site involves Arg-346.

The protein belongs to the peptidase M17 family. Mn(2+) is required as a cofactor.

The protein resides in the cytoplasm. It catalyses the reaction Release of an N-terminal amino acid, Xaa-|-Yaa-, in which Xaa is preferably Leu, but may be other amino acids including Pro although not Arg or Lys, and Yaa may be Pro. Amino acid amides and methyl esters are also readily hydrolyzed, but rates on arylamides are exceedingly low.. The enzyme catalyses Release of an N-terminal amino acid, preferentially leucine, but not glutamic or aspartic acids.. In terms of biological role, presumably involved in the processing and regular turnover of intracellular proteins. Catalyzes the removal of unsubstituted N-terminal amino acids from various peptides. This is Probable cytosol aminopeptidase from Bacillus thuringiensis subsp. konkukian (strain 97-27).